Reading from the N-terminus, the 379-residue chain is Chaperone protein DnaJ (379 aa).

In terms of domain architecture, J spans 7-72; it reads CYYETLEVER…DKRAAYDRYG (66 aa). The CR-type zinc-finger motif lies at 135–213; that stretch reads GKTAQIEIPV…CTGSGRVTKE (79 aa). Zn(2+) is bound by residues C148, C151, C165, C168, C187, C190, C201, and C204. 4 CXXCXGXG motif repeats span residues 148 to 155, 165 to 172, 187 to 194, and 201 to 208; these read CESCSGTG, CSTCGGAG, CPSCQGRG, and CPSCTGSG.

Belongs to the DnaJ family. Homodimer. Zn(2+) is required as a cofactor.

Its subcellular location is the cytoplasm. Functionally, participates actively in the response to hyperosmotic and heat shock by preventing the aggregation of stress-denatured proteins and by disaggregating proteins, also in an autonomous, DnaK-independent fashion. Unfolded proteins bind initially to DnaJ; upon interaction with the DnaJ-bound protein, DnaK hydrolyzes its bound ATP, resulting in the formation of a stable complex. GrpE releases ADP from DnaK; ATP binding to DnaK triggers the release of the substrate protein, thus completing the reaction cycle. Several rounds of ATP-dependent interactions between DnaJ, DnaK and GrpE are required for fully efficient folding. Also involved, together with DnaK and GrpE, in the DNA replication of plasmids through activation of initiation proteins. The sequence is that of Chaperone protein DnaJ from Rhodopseudomonas palustris (strain HaA2).